Consider the following 613-residue polypeptide: Probable LRR receptor-like serine/threonine-protein kinase At5g10290 (613 aa).

A signal peptide spans 1-31 (MRMFSLQKMAMAFTLLFFACLCSFVSPDAQG). Topologically, residues 32–225 (DALFALRISL…SGDSSKPKTG (194 aa)) are extracellular. Residues asparagine 81 and asparagine 116 are each glycosylated (N-linked (GlcNAc...) asparagine). LRR repeat units lie at residues 95-117 (NLKTLTLKGNGITGEIPEDFGNL), 119-141 (SLTSLDLEDNQLTGRIPSTIGNL), 143-166 (KLQFLTLSRNKLNGTIPESLTGLP), and 167-189 (NLLNLLLDSNSLSGQIPQSLFEI). N-linked (GlcNAc...) asparagine glycosylation is present at asparagine 155. Residue asparagine 193 is glycosylated (N-linked (GlcNAc...) asparagine). The helical transmembrane segment at 226-246 (IIAGVVAGVTVVLFGILLFLF) threads the bilayer. The Cytoplasmic portion of the chain corresponds to 247 to 613 (CKDRHKGYRR…QDAIELSGGR (367 aa)). Position 287 is a phosphothreonine (threonine 287). Positions 290–569 (FSEKNVLGQG…VVRMLEGEGL (280 aa)) constitute a Protein kinase domain. ATP is bound at residue 296–304 (LGQGGFGKV). Threonine 313 is modified (phosphothreonine). Lysine 318 is an ATP binding site. A Phosphoserine modification is found at serine 371. Threonine 390 carries the phosphothreonine modification. Aspartate 417 serves as the catalytic Proton acceptor. Threonine 450, threonine 451, and threonine 456 each carry phosphothreonine. Position 464 is a phosphotyrosine (tyrosine 464). Serine 466 is subject to Phosphoserine. Phosphothreonine is present on threonine 467. Serine 471 carries the post-translational modification Phosphoserine. Threonine 547 bears the Phosphothreonine mark.

This sequence belongs to the protein kinase superfamily. Ser/Thr protein kinase family.

It is found in the cell membrane. It catalyses the reaction L-seryl-[protein] + ATP = O-phospho-L-seryl-[protein] + ADP + H(+). The enzyme catalyses L-threonyl-[protein] + ATP = O-phospho-L-threonyl-[protein] + ADP + H(+). This chain is Probable LRR receptor-like serine/threonine-protein kinase At5g10290, found in Arabidopsis thaliana (Mouse-ear cress).